A 287-amino-acid chain; its full sequence is Syntaxin-11 (287 aa).

Positions L41–R71 form a coiled coil. A t-SNARE coiled-coil homology domain is found at L204–A266.

Belongs to the syntaxin family. As to quaternary structure, interacts with the SNARE proteins SNAP-23 and VAMP.

It is found in the membrane. The protein localises to the golgi apparatus. It localises to the trans-Golgi network membrane. Its function is as follows. SNARE that acts to regulate protein transport between late endosomes and the trans-Golgi network. The polypeptide is Syntaxin-11 (STX11) (Homo sapiens (Human)).